The chain runs to 145 residues: Deoxyuridine 5'-triphosphate nucleotidohydrolase (145 aa).

Substrate-binding positions include Arg-62–Gly-64, Asn-75, Thr-79–Asp-81, and Lys-89.

Belongs to the dUTPase family. Mg(2+) is required as a cofactor.

It carries out the reaction dUTP + H2O = dUMP + diphosphate + H(+). It functions in the pathway pyrimidine metabolism; dUMP biosynthesis; dUMP from dCTP (dUTP route): step 2/2. Functionally, this enzyme is involved in nucleotide metabolism: it produces dUMP, the immediate precursor of thymidine nucleotides and it decreases the intracellular concentration of dUTP so that uracil cannot be incorporated into DNA. This chain is Deoxyuridine 5'-triphosphate nucleotidohydrolase, found in Helicobacter pylori (strain ATCC 700392 / 26695) (Campylobacter pylori).